We begin with the raw amino-acid sequence, 170 residues long: J domain-containing protein (170 aa).

The 66-residue stretch at 17-82 folds into the J domain; the sequence is DYYALLGCDE…SKRALYDKWR (66 aa). The tract at residues 101–170 is disordered; the sequence is QQSMHWSKPN…VLSKFRNYEI (70 aa). Residues 110–120 are compositionally biased toward basic and acidic residues; it reads NTKDRMLEGDG. Residues 121–134 are compositionally biased toward low complexity; that stretch reads SKPSGPSSLGPSNP.

This chain is J domain-containing protein (jdp), found in Bombyx mori (Silk moth).